The sequence spans 125 residues: Acidic phospholipase A2 HTe (125 aa).

7 disulfide bridges follow: C11–C77, C27–C124, C29–C45, C44–C105, C51–C98, C61–C91, and C84–C96. The Ca(2+) site is built by Y28, G30, and G32. H48 is a catalytic residue. D49 lines the Ca(2+) pocket. The active site involves D99.

Belongs to the phospholipase A2 family. Group I subfamily. D49 sub-subfamily. Requires Ca(2+) as cofactor. In terms of processing, no glycosylation was detected on this protein. As to expression, expressed by the venom gland.

The protein localises to the secreted. It carries out the reaction a 1,2-diacyl-sn-glycero-3-phosphocholine + H2O = a 1-acyl-sn-glycero-3-phosphocholine + a fatty acid + H(+). In terms of biological role, snake venom phospholipase A2 (PLA2) that blocks neuromuscular transmission, but that does not produce blockade by virtue of a selective action on nerve endings. Instead, the toxin acts both on nerve and on muscle. PLA2 catalyzes the calcium-dependent hydrolysis of the 2-acyl groups in 3-sn-phosphoglycerides. This is Acidic phospholipase A2 HTe from Notechis scutatus scutatus (Mainland tiger snake).